Here is a 131-residue protein sequence, read N- to C-terminus: Photosystem II extrinsic protein U (131 aa).

The N-terminal stretch at 1–28 is a signal peptide; that stretch reads MKFISRLLVACSLLIGLMGFLGADLAQA. Residues 29-36 constitute a propeptide that is removed on maturation; sequence LTPNPILA.

It belongs to the PsbU family. As to quaternary structure, PSII is composed of 1 copy each of membrane proteins PsbA, PsbB, PsbC, PsbD, PsbE, PsbF, PsbH, PsbI, PsbJ, PsbK, PsbL, PsbM, PsbT, PsbX, PsbY, PsbZ, Psb30/Ycf12, peripheral proteins PsbO, CyanoQ (PsbQ), PsbU, PsbV and a large number of cofactors. It forms dimeric complexes.

Its subcellular location is the cellular thylakoid membrane. One of the extrinsic, lumenal subunits of photosystem II (PSII). PSII is a light-driven water plastoquinone oxidoreductase, using light energy to abstract electrons from H(2)O, generating a proton gradient subsequently used for ATP formation. The extrinsic proteins stabilize the structure of photosystem II oxygen-evolving complex (OEC), the ion environment of oxygen evolution and protect the OEC against heat-induced inactivation. May modulate the Cl(-) requirement for oxygen evolution. The sequence is that of Photosystem II extrinsic protein U from Synechocystis sp. (strain ATCC 27184 / PCC 6803 / Kazusa).